Consider the following 109-residue polypeptide: uncharacterized protein (109 aa).

The helical transmembrane segment at 12 to 32 (PNILIKGVYIFVLYGMCICIV) threads the bilayer.

It localises to the membrane. This is an uncharacterized protein from Saccharomyces cerevisiae (strain ATCC 204508 / S288c) (Baker's yeast).